The primary structure comprises 118 residues: Small ribosomal subunit protein uS13 (118 aa).

Positions 94–118 (SLPLRGQRTKTNARTRKGPRKPIRK) are disordered.

It belongs to the universal ribosomal protein uS13 family. In terms of assembly, part of the 30S ribosomal subunit. Forms a loose heterodimer with protein S19. Forms two bridges to the 50S subunit in the 70S ribosome.

Located at the top of the head of the 30S subunit, it contacts several helices of the 16S rRNA. In the 70S ribosome it contacts the 23S rRNA (bridge B1a) and protein L5 of the 50S subunit (bridge B1b), connecting the 2 subunits; these bridges are implicated in subunit movement. Contacts the tRNAs in the A and P-sites. The protein is Small ribosomal subunit protein uS13 of Shewanella denitrificans (strain OS217 / ATCC BAA-1090 / DSM 15013).